An 835-amino-acid polypeptide reads, in one-letter code: Leucine--tRNA ligase (835 aa).

Residues 36-46 carry the 'HIGH' region motif; the sequence is PYPSGKIHVGH. The 'KMSKS' region signature appears at 602–606; the sequence is KMSKS. K605 lines the ATP pocket.

The protein belongs to the class-I aminoacyl-tRNA synthetase family.

It localises to the cytoplasm. The catalysed reaction is tRNA(Leu) + L-leucine + ATP = L-leucyl-tRNA(Leu) + AMP + diphosphate. The protein is Leucine--tRNA ligase of Rickettsia felis (strain ATCC VR-1525 / URRWXCal2) (Rickettsia azadi).